We begin with the raw amino-acid sequence, 575 residues long: MDKYDKIIDLTKRRGFLWNSFEIYGGIAGFFDYGPLGAILKNNVINTWRKHYIVNEGFYEIDSPTVTPYEVLKASGHVENFTDPLVECKSCLESFRADHIIEENVDVDTEGKTLQELQEMIEKNNIKCPKCGGEFKEVSTFNLMFATSIGPGGKRAAFMRPETAQGIFIQFKRISQFFRNKLPFGAVQIGKAYRNEISPRQGVIRLREFTQAEGEFFIDSRKKENFEKFESVKEIVLPLLSGKNQENESLSAEEKIVRMSLSDAVKNGIIAHEAIAYYIAVTKKFLMEIGIDESKLRFRQHLPNEMAHYAADCWDAELYTDRYGWIECVGIADRTNYDLLAHMKNSSEDLSVFVELDEDKEIEVYEIELNYKLVGRTFKGDSKVLEESLKELDDKKMEELVEALETEGKYVLSTCKRDFELLKEYLTAKKVKKTVKGEKIIPHVIEPSYGIDRITYCVMEHAFKEDEDRTVMGFSNAVSPIKVGVFPLVNKEGMPEIAMDLKNKLRENGLIAEYDDSGAIGRRYMRMDEVGTPFCVTIDGETLTDSSVTIRERDSREQFRIPINEVVPYIKDKLN.

R96 and E162 together coordinate substrate. Residues 194 to 196, 204 to 209, 327 to 328, and 450 to 453 each bind ATP; these read RNE, IRLREF, EC, and GIDR. 209 to 213 provides a ligand contact to substrate; it reads FTQAE. Residue 446–450 coordinates substrate; it reads EPSYG.

Belongs to the class-II aminoacyl-tRNA synthetase family.

Its subcellular location is the cytoplasm. It catalyses the reaction tRNA(Gly) + glycine + ATP = glycyl-tRNA(Gly) + AMP + diphosphate. Functionally, catalyzes the attachment of glycine to tRNA(Gly). The chain is Glycine--tRNA ligase from Methanococcus maripaludis (strain C5 / ATCC BAA-1333).